A 314-amino-acid polypeptide reads, in one-letter code: 4-hydroxy-3-methylbut-2-enyl diphosphate reductase (314 aa).

Cys-12 contacts [4Fe-4S] cluster. The (2E)-4-hydroxy-3-methylbut-2-enyl diphosphate site is built by His-41 and His-74. Dimethylallyl diphosphate-binding residues include His-41 and His-74. The isopentenyl diphosphate site is built by His-41 and His-74. [4Fe-4S] cluster is bound at residue Cys-96. His-124 is a binding site for (2E)-4-hydroxy-3-methylbut-2-enyl diphosphate. His-124 provides a ligand contact to dimethylallyl diphosphate. Position 124 (His-124) interacts with isopentenyl diphosphate. Glu-126 (proton donor) is an active-site residue. A (2E)-4-hydroxy-3-methylbut-2-enyl diphosphate-binding site is contributed by Thr-167. Cys-197 provides a ligand contact to [4Fe-4S] cluster. Residues Ser-225, Ser-226, Asn-227, and Ser-269 each contribute to the (2E)-4-hydroxy-3-methylbut-2-enyl diphosphate site. Positions 225, 226, 227, and 269 each coordinate dimethylallyl diphosphate. Isopentenyl diphosphate contacts are provided by Ser-225, Ser-226, Asn-227, and Ser-269.

Belongs to the IspH family. [4Fe-4S] cluster serves as cofactor.

The catalysed reaction is isopentenyl diphosphate + 2 oxidized [2Fe-2S]-[ferredoxin] + H2O = (2E)-4-hydroxy-3-methylbut-2-enyl diphosphate + 2 reduced [2Fe-2S]-[ferredoxin] + 2 H(+). The enzyme catalyses dimethylallyl diphosphate + 2 oxidized [2Fe-2S]-[ferredoxin] + H2O = (2E)-4-hydroxy-3-methylbut-2-enyl diphosphate + 2 reduced [2Fe-2S]-[ferredoxin] + 2 H(+). It participates in isoprenoid biosynthesis; dimethylallyl diphosphate biosynthesis; dimethylallyl diphosphate from (2E)-4-hydroxy-3-methylbutenyl diphosphate: step 1/1. Its pathway is isoprenoid biosynthesis; isopentenyl diphosphate biosynthesis via DXP pathway; isopentenyl diphosphate from 1-deoxy-D-xylulose 5-phosphate: step 6/6. Catalyzes the conversion of 1-hydroxy-2-methyl-2-(E)-butenyl 4-diphosphate (HMBPP) into a mixture of isopentenyl diphosphate (IPP) and dimethylallyl diphosphate (DMAPP). Acts in the terminal step of the DOXP/MEP pathway for isoprenoid precursor biosynthesis. The sequence is that of 4-hydroxy-3-methylbut-2-enyl diphosphate reductase from Actinobacillus pleuropneumoniae serotype 3 (strain JL03).